The following is a 127-amino-acid chain: F420-non-reducing hydrogenase subunit G (127 aa).

The protein belongs to the [NiFe]/[NiFeSe] hydrogenase small subunit family. The F420-non-reducing hydrogenase is composed of three subunits; MvhA, MvhD and MvhG. It forms a complex with the heterodisulfide reductase (hdr).

In terms of biological role, part of a complex that provides reducing equivalents for heterodisulfide reductase. The chain is F420-non-reducing hydrogenase subunit G (mvhG) from Methanothermus fervidus.